Here is a 185-residue protein sequence, read N- to C-terminus: Ribosome-recycling factor (185 aa).

Belongs to the RRF family.

The protein resides in the cytoplasm. Its function is as follows. Responsible for the release of ribosomes from messenger RNA at the termination of protein biosynthesis. May increase the efficiency of translation by recycling ribosomes from one round of translation to another. This chain is Ribosome-recycling factor, found in Trichlorobacter lovleyi (strain ATCC BAA-1151 / DSM 17278 / SZ) (Geobacter lovleyi).